The following is a 359-amino-acid chain: MTSTSKGILRPFLIVCIILGCFMACLLIYIKPTNSWIFSPMESASSVLKMKNFFSTKTDYFNETTILVWVWPFGQTFDLTSCQAMFNIQGCHLTTDRSLYNKSHAVLIHHRDISWDLTNLPQQARPPFQKWIWMNLESPTHTPQKSGIEHLFNLTLTYRRDSDIQVPYGFLTVSTNPFVFEVPSKEKLVCWVVSNWNPEHARVKYYNELSKSIEIHTYGQAFGEYVNDKNLIPTISTCKFYLSFENSIHKDYITEKLYNAFLAGSVPVVLGPSRENYENYIPADSFIHVEDYNSPSELAKYLKEVDKNNKLYLSYFNWRKDFTVNLPRFWESHACLACDHVKRHQEYKSVGNLEKWFWN.

Residues Met1–Pro11 lie on the Cytoplasmic side of the membrane. The chain crosses the membrane as a helical; Signal-anchor for type II membrane protein span at residues Phe12 to Pro32. Residues Thr33–Asn359 lie on the Lumenal side of the membrane. Residue Asn62 is glycosylated (N-linked (GlcNAc...) asparagine). The acceptor-binding stretch occupies residues Glu63–Tyr168. Residue Gln75 coordinates a beta-D-galactosyl-(1-&gt;4)-N-acetyl-beta-D-glucosaminyl derivative. 3 disulfide bridges follow: Cys82–Cys335, Cys91–Cys338, and Cys190–Cys238. N-linked (GlcNAc...) asparagine glycosylation is present at Asn101. Glu137 is a binding site for a beta-D-galactosyl-(1-&gt;4)-N-acetyl-beta-D-glucosaminyl derivative. The active-site Nucleophile is the Glu137. A GDP-beta-L-fucose-binding site is contributed by Glu137. The N-linked (GlcNAc...) asparagine glycan is linked to Asn153. 11 residues coordinate GDP-beta-L-fucose: Tyr168, Val192, Ser194, Asn195, Arg202, Val226, Tyr241, Asn246, Tyr252, Glu255, and Lys256. The donor-binding stretch occupies residues Gly169–Leu326. The tract at residues Pro327–Asn359 is acceptor-binding.

Belongs to the glycosyltransferase 10 family. Homodimer. In terms of processing, N-glycosylated with complex-type N-glycans. The glycan alpha-D-Man-(1-&gt;3)-beta-D-Man-(1-&gt;4)-GlcNAc-(1-&gt;4)-GlcNAc is attached at Asn-153. As to expression, strongly expressed in forebrain and stomach, lower expression in spleen and peripheral blood leukocytes, and no expression in small intestine, colon, liver, lung, kidney, adrenal cortex or uterus. Highly expressed in granulocytes. Not expressed in monocytes.

The protein resides in the golgi apparatus. The protein localises to the trans-Golgi network membrane. It localises to the golgi apparatus membrane. The catalysed reaction is a beta-D-galactosyl-(1-&gt;4)-N-acetyl-beta-D-glucosaminyl derivative + GDP-beta-L-fucose = a beta-D-galactosyl-(1-&gt;4)-[alpha-L-fucosyl-(1-&gt;3)]-N-acetyl-beta-D-glucosaminyl derivative + GDP + H(+). The enzyme catalyses an alpha-Neu5Ac-(2-&gt;3)-beta-D-Gal-(1-&gt;4)-beta-D-GlcNAc-(1-&gt;3)-beta-D-Gal-(1-&gt;4)-beta-D-GlcNAc derivative + GDP-beta-L-fucose = an alpha-Neu5Ac-(2-&gt;3)-beta-D-Gal-(1-&gt;4)-beta-D-GlcNAc-(1-&gt;3)-beta-D-Gal-(1-&gt;4)-[alpha-L-Fuc-(1-&gt;3)]-beta-D-GlcNAc derivative + GDP + H(+). It carries out the reaction alpha-N-glycoloylneuraminosyl-(2-&gt;3)-beta-D-galactosyl-(1-&gt;4)-N-acetyl-beta-D-glucosaminyl-(1-&gt;3)-beta-D-galactosyl-(1-&gt;4)-N-acetyl-beta-D-glucosaminyl-(1-&gt;3)-beta-D-galactosyl-(1-&gt;4)-beta-D-glucosyl-(1&lt;-&gt;1')-ceramide + GDP-beta-L-fucose = alpha-N-glycoloylneuraminosyl-(2-&gt;3)-beta-D-galactosyl-(1-&gt;4)-N-acetyl-beta-D-glucosaminyl-(1-&gt;3)-beta-D-galactosyl-(1-&gt;4)-[alpha-L-fucosyl-(1-&gt;3)]-N-acetyl-beta-D-glucosaminyl-(1-&gt;3)-beta-D-galactosyl-(1-&gt;4)-beta-D-glucosyl-(1&lt;-&gt;1')-ceramide + GDP + H(+). It catalyses the reaction alpha-D-galactosyl-(1-&gt;3)-beta-D-galactosyl-(1-&gt;4)-N-acetyl-beta-D-glucosaminyl-(1-&gt;3)-beta-D-galactosyl-(1-&gt;4)-beta-D-glucosyl-(1&lt;-&gt;1')-ceramide + GDP-beta-L-fucose = a neolactoside IV(3)-alpha-Gal,III(3)-alpha-Fuc-nLc4Cer + GDP + H(+). The catalysed reaction is a neolactoside nLc4Cer + GDP-beta-L-fucose = a neolactoside III(3)-alpha-Fuc-nLc4Cer + GDP + H(+). The enzyme catalyses an N-acetyl-alpha-neuraminyl-(2-&gt;3)-beta-D-galactosyl-(1-&gt;4)-N-acetyl-beta-D-glucosaminyl derivative + GDP-beta-L-fucose = an alpha-Neu5Ac-(2-&gt;3)-beta-D-Gal-(1-&gt;4)-[alpha-L-Fuc-(1-&gt;3)]-beta-D-GlcNAc derivative + GDP + H(+). It carries out the reaction beta-D-Gal-(1-&gt;4)-beta-D-GlcNAc-(1-&gt;3)-beta-D-Gal-(1-&gt;4)-D-Glc + GDP-beta-L-fucose = beta-D-Gal-(1-&gt;4)-[alpha-L-Fuc-(1-&gt;3)]-beta-D-GlcNAc-(1-&gt;3)-beta-D-Gal-(1-&gt;4)-D-Glc + GDP + H(+). It catalyses the reaction an alpha-L-Fuc-(1-&gt;2)-beta-D-Gal-(1-&gt;4)-beta-D-GlcNAc derivative + GDP-beta-L-fucose = an alpha-L-Fuc-(1-&gt;2)-beta-D-Gal-(1-&gt;4)-[alpha-L-Fuc-(1-&gt;3)]-beta-D-GlcNAc derivative + GDP + H(+). The protein operates within protein modification; protein glycosylation. It functions in the pathway glycolipid biosynthesis. Its activity is regulated as follows. Activated by Mn2+. Catalyzes alpha(1-&gt;3) linkage of fucosyl moiety transferred from GDP-beta-L-fucose to N-acetyl glucosamine (GlcNAc) within type 2 lactosamine (LacNAc, beta-D-Gal-(1-&gt;4)-beta-D-GlcNAc-) glycan attached to glycolipids and N- or O-linked glycoproteins. Fucosylates distal type 2 LacNAc and its fucosylated (H-type 2 LacNAc) and sialylated (sialyl-type 2 LacNAc) derivatives to form Lewis x (Lex) (CD15) and Lewis y (Ley) antigenic epitopes involved in cell adhesion and differentiation. Generates Lex epitopes in the brain, presumably playing a role in the maintenance of neuronal stemness and neurite outgrowth in progenitor neural cells. Fucosylates the internal type 2 LacNAc unit of the polylactosamine chain to form VIM-2 antigen that serves as recognition epitope for SELE. Can also modify milk oligosaccharides, in particular type 2 tetrasaccharide LNnT. This Homo sapiens (Human) protein is 4-galactosyl-N-acetylglucosaminide 3-alpha-L-fucosyltransferase 9.